Reading from the N-terminus, the 335-residue chain is Legumin type B (335 aa).

Disordered stretches follow at residues 47–87 (PETQ…GNSV) and 102–155 (TEED…GRNG). The span at 105–118 (DTAKRLRSPRDKRN) shows a compositional bias: basic and acidic residues. Residues 135 to 144 (QQEEEEEEEE) are compositionally biased toward acidic residues. Residues 167–314 (ENIAQPARAD…AFGLRQRQVT (148 aa)) form the Cupin type-1 domain.

The protein belongs to the 11S seed storage protein (globulins) family. In terms of assembly, hexamer; each subunit is composed of an acidic and a basic chain derived from a single precursor and linked by a disulfide bond.

In terms of biological role, this protein found in the seeds of many leguminous and non-leguminous plants is the source of sulfur-containing amino acids in seed meals. The polypeptide is Legumin type B (LEB2) (Vicia faba (Broad bean)).